Here is a 372-residue protein sequence, read N- to C-terminus: N-methyl-L-tryptophan oxidase (372 aa).

An FAD-binding site is contributed by 4–34; the sequence is DLIIIGSGSVGAAAGYYATRAGLKVLMTDAH. Cys307 carries the post-translational modification S-8alpha-FAD cysteine.

Belongs to the MSOX/MTOX family. MTOX subfamily. As to quaternary structure, monomer. The cofactor is FAD.

It carries out the reaction N(alpha)-methyl-L-tryptophan + O2 + H2O = L-tryptophan + formaldehyde + H2O2. Functionally, catalyzes the oxidative demethylation of N-methyl-L-tryptophan. This chain is N-methyl-L-tryptophan oxidase, found in Salmonella dublin (strain CT_02021853).